Consider the following 1028-residue polypeptide: SWI/SNF-related matrix-associated actin-dependent regulator of chromatin subfamily A containing DEAD/H box 1 (1028 aa).

Met1 is subject to N-acetylmethionine. The interval 13–81 is disordered; it reads KRNKIEEAPE…PENDRKASIS (69 aa). Thr54 carries the phosphothreonine modification. Ser57 bears the Phosphoserine mark. Thr71 is modified (phosphothreonine). Lys77 is covalently cross-linked (Glycyl lysine isopeptide (Lys-Gly) (interchain with G-Cter in SUMO2)). Ser79 is subject to Phosphoserine. Lys84 participates in a covalent cross-link: Glycyl lysine isopeptide (Lys-Gly) (interchain with G-Cter in SUMO2). Ser124, Ser127, Ser132, and Ser153 each carry phosphoserine. Positions 158 to 200 constitute a CUE 1 domain; sequence YSDNLSTVRQTRYSENLSSDLLKLIDSTSTMDGAIAAALLMFG. Disordered regions lie at residues 204-253 and 303-348; these read GGGP…NWEK and ASPS…KRKK. Ser213, Ser216, Ser241, and Ser244 each carry phosphoserine. The 44-residue stretch at 253 to 296 folds into the CUE 2 domain; that stretch reads KQESIVLKLQKEFPNFDKEELREVLKEHEWMYTEALESLKVFAE. Ser304 bears the Phosphoserine mark. Residues Lys337 and Lys473 each participate in a glycyl lysine isopeptide (Lys-Gly) (interchain with G-Cter in SUMO2) cross-link. The Helicase ATP-binding domain occupies 511 to 679; it reads ALVHKHGLNG…MSLLNFVMPH (169 aa). 523–531 is a binding site for ATP; sequence ADEMGLGKT. Residues 630-633 carry the DEGH box motif; it reads DEGH. A Nuclear localization signal motif is present at residues 723–740; the sequence is RRVKEEVLKQLPPKKDRI. Lys726 participates in a covalent cross-link: Glycyl lysine isopeptide (Lys-Gly) (interchain with G-Cter in SUMO2). The 153-residue stretch at 860–1012 folds into the Helicase C-terminal domain; sequence VLGCILSELK…MTTVDEGDEG (153 aa). 899 to 906 contributes to the ATP binding site; sequence YLRLDGKT. Lys998 participates in a covalent cross-link: Glycyl lysine isopeptide (Lys-Gly) (interchain with G-Cter in SUMO2). Residues 1007–1010 carry the DEAD box motif; sequence DEGD.

It belongs to the SNF2/RAD54 helicase family. As to quaternary structure, binds to DNA preferentially in the vicinity of transcriptional start sites. Interacts with MSH2 and TRIM28. Part of a complex composed of TRIM28, HDAC1, HDAC2 and EHMT2. Interacts with PCNA.

The protein localises to the nucleus. It localises to the chromosome. The enzyme catalyses ATP + H2O = ADP + phosphate + H(+). DNA helicase that possesses intrinsic ATP-dependent nucleosome-remodeling activity and is both required for DNA repair and heterochromatin organization. Promotes DNA end resection of double-strand breaks (DSBs) following DNA damage: probably acts by weakening histone DNA interactions in nucleosomes flanking DSBs. Required for the restoration of heterochromatin organization after replication. Acts at replication sites to facilitate the maintenance of heterochromatin by directing H3 and H4 histones deacetylation, H3 'Lys-9' trimethylation (H3K9me3) and restoration of silencing. This is SWI/SNF-related matrix-associated actin-dependent regulator of chromatin subfamily A containing DEAD/H box 1 (SMARCAD1) from Bos taurus (Bovine).